Here is a 384-residue protein sequence, read N- to C-terminus: S-adenosylmethionine synthase (384 aa).

His15 provides a ligand contact to ATP. Asp17 is a Mg(2+) binding site. Residue Glu43 participates in K(+) binding. 2 residues coordinate L-methionine: Glu56 and Gln99. The interval 99–109 (QSPDINQGVDK) is flexible loop. Residues 164 to 166 (DAK), 230 to 231 (RF), Asp239, 245 to 246 (RK), Ala262, and Lys266 contribute to the ATP site. An L-methionine-binding site is contributed by Asp239. Lys270 provides a ligand contact to L-methionine.

It belongs to the AdoMet synthase family. Homotetramer; dimer of dimers. Mg(2+) serves as cofactor. K(+) is required as a cofactor.

It localises to the cytoplasm. The enzyme catalyses L-methionine + ATP + H2O = S-adenosyl-L-methionine + phosphate + diphosphate. The protein operates within amino-acid biosynthesis; S-adenosyl-L-methionine biosynthesis; S-adenosyl-L-methionine from L-methionine: step 1/1. Functionally, catalyzes the formation of S-adenosylmethionine (AdoMet) from methionine and ATP. The overall synthetic reaction is composed of two sequential steps, AdoMet formation and the subsequent tripolyphosphate hydrolysis which occurs prior to release of AdoMet from the enzyme. In Vibrio parahaemolyticus serotype O3:K6 (strain RIMD 2210633), this protein is S-adenosylmethionine synthase.